Consider the following 490-residue polypeptide: Betaine aldehyde dehydrogenase (490 aa).

3 residues coordinate K(+): serine 26, isoleucine 27, and aspartate 93. Residue 150–152 (GAW) coordinates NAD(+). Catalysis depends on lysine 162, which acts as the Charge relay system. 176-179 (KPSE) contacts NAD(+). Valine 180 lines the K(+) pocket. An NAD(+)-binding site is contributed by 230 to 233 (GTVT). Residue leucine 246 participates in K(+) binding. The Proton acceptor role is filled by glutamate 252. Residues glycine 254, cysteine 286, and glutamate 387 each coordinate NAD(+). The active-site Nucleophile is the cysteine 286. The residue at position 286 (cysteine 286) is a Cysteine sulfenic acid (-SOH). Residues lysine 457 and glycine 460 each coordinate K(+). Glutamate 464 (charge relay system) is an active-site residue.

This sequence belongs to the aldehyde dehydrogenase family. In terms of assembly, dimer of dimers. Requires K(+) as cofactor.

The enzyme catalyses betaine aldehyde + NAD(+) + H2O = glycine betaine + NADH + 2 H(+). The protein operates within amine and polyamine biosynthesis; betaine biosynthesis via choline pathway; betaine from betaine aldehyde: step 1/1. In terms of biological role, involved in the biosynthesis of the osmoprotectant glycine betaine. Catalyzes the irreversible oxidation of betaine aldehyde to the corresponding acid. In Ectopseudomonas mendocina (strain ymp) (Pseudomonas mendocina), this protein is Betaine aldehyde dehydrogenase.